A 237-amino-acid polypeptide reads, in one-letter code: Maternal B9.10 protein (237 aa).

This sequence belongs to the BTG family.

The chain is Maternal B9.10 protein from Xenopus laevis (African clawed frog).